We begin with the raw amino-acid sequence, 63 residues long: Prokaryotic ubiquitin-like protein Pup (63 aa).

Residues 1–28 (MPQEFEQIRSADQPLDSEESAPVAGART) form a disordered region. Positions 19 to 57 (ESAPVAGARTDDTVDALDAVLDDIESVLETNAEEYVGSF) are ARC ATPase binding. An Isoglutamyl lysine isopeptide (Glu-Lys) (interchain with K-? in acceptor proteins) cross-link involves residue E63.

Belongs to the prokaryotic ubiquitin-like protein family. In terms of assembly, strongly interacts with the proteasome-associated ATPase ARC through a hydrophobic interface; the interacting region of Pup lies in its C-terminal half. There is one Pup binding site per ARC hexamer ring.

It functions in the pathway protein degradation; proteasomal Pup-dependent pathway. In terms of biological role, protein modifier that is covalently attached to lysine residues of substrate proteins, thereby targeting them for proteasomal degradation. The tagging system is termed pupylation. The chain is Prokaryotic ubiquitin-like protein Pup from Bifidobacterium dentium (strain ATCC 27534 / DSM 20436 / JCM 1195 / Bd1).